We begin with the raw amino-acid sequence, 544 residues long: Chaperonin GroEL (544 aa).

ATP is bound by residues 30 to 33, Lys51, 87 to 91, Gly415, 481 to 483, and Asp497; these read TLGP, DGTTT, and DAL.

Belongs to the chaperonin (HSP60) family. As to quaternary structure, forms a cylinder of 14 subunits composed of two heptameric rings stacked back-to-back. Interacts with the co-chaperonin GroES.

It localises to the cytoplasm. It catalyses the reaction ATP + H2O + a folded polypeptide = ADP + phosphate + an unfolded polypeptide.. In terms of biological role, together with its co-chaperonin GroES, plays an essential role in assisting protein folding. The GroEL-GroES system forms a nano-cage that allows encapsulation of the non-native substrate proteins and provides a physical environment optimized to promote and accelerate protein folding. The polypeptide is Chaperonin GroEL (Chlamydia trachomatis serovar A (strain ATCC VR-571B / DSM 19440 / HAR-13)).